We begin with the raw amino-acid sequence, 386 residues long: Pepsin A (386 aa).

Positions 1–15 (MKWLLLLSLVALSEC) are cleaved as a signal peptide. A propeptide spans 16-60 (YIYKVPLVKKKSLRKNLMEQGLLQDYLKTHSINPASKYLKEAASM) (activation peptide). The region spanning 74–383 (YFGTIGIGTP…DRGNNQVGLA (310 aa)) is the Peptidase A1 domain. Aspartate 92 is a catalytic residue. Cystine bridges form between cysteine 105/cysteine 110 and cysteine 266/cysteine 270. Aspartate 275 is a catalytic residue. A disulfide bridge links cysteine 309 with cysteine 342.

It belongs to the peptidase A1 family.

It localises to the secreted. It catalyses the reaction Preferential cleavage: hydrophobic, preferably aromatic, residues in P1 and P1' positions. Cleaves 1-Phe-|-Val-2, 4-Gln-|-His-5, 13-Glu-|-Ala-14, 14-Ala-|-Leu-15, 15-Leu-|-Tyr-16, 16-Tyr-|-Leu-17, 23-Gly-|-Phe-24, 24-Phe-|-Phe-25 and 25-Phe-|-Tyr-26 bonds in the B chain of insulin.. Its function is as follows. Shows particularly broad specificity; although bonds involving phenylalanine and leucine are preferred, many others are also cleaved to some extent. The sequence is that of Pepsin A (PGA) from Rhinolophus ferrumequinum (Greater horseshoe bat).